The sequence spans 226 residues: UPF0173 metal-dependent hydrolase SRU_1937 (226 aa).

This sequence belongs to the UPF0173 family.

In Salinibacter ruber (strain DSM 13855 / M31), this protein is UPF0173 metal-dependent hydrolase SRU_1937.